We begin with the raw amino-acid sequence, 536 residues long: Arylsulfatase K (536 aa).

An N-terminal signal peptide occupies residues 1-24 (MIQKCIALSLFLFSALPEDNIVRA). The Ca(2+) site is built by aspartate 42 and cysteine 82. The active-site Nucleophile is the cysteine 82. Residue cysteine 82 is modified to 3-oxoalanine (Cys). Lysine 130 serves as a coordination point for substrate. Asparagine 195 is a glycosylation site (N-linked (GlcNAc...) asparagine). Histidine 253 provides a ligand contact to substrate. A glycan (N-linked (GlcNAc...) asparagine) is linked at asparagine 264. The Ca(2+) site is built by aspartate 315 and histidine 316. 3 N-linked (GlcNAc...) asparagine glycosylation sites follow: asparagine 377, asparagine 416, and asparagine 501.

It belongs to the sulfatase family. Ca(2+) is required as a cofactor. In terms of processing, the conversion to 3-oxoalanine (also known as C-formylglycine, FGly), of a serine or cysteine residue in prokaryotes and of a cysteine residue in eukaryotes, is critical for catalytic activity.

The protein resides in the secreted. The protein localises to the lysosome. The enzyme catalyses an aryl sulfate + H2O = a phenol + sulfate + H(+). The catalysed reaction is Hydrolysis of the 2-sulfate groups of the 2-O-sulfo-D-glucuronate residues of chondroitin sulfate, heparin and heparitin sulfate.. Catalyzes the hydrolysis of pseudosubstrates such as p-nitrocatechol sulfate and p-nitrophenyl sulfate. Catalyzes the hydrolysis of the 2-sulfate groups of the 2-O-sulfo-D-glucuronate residues of chondroitin sulfate, heparin and heparitin sulfate. Acts selectively on 2-sulfoglucuronate and lacks activity against 2-sulfoiduronate. This chain is Arylsulfatase K (arsk), found in Xenopus laevis (African clawed frog).